A 440-amino-acid polypeptide reads, in one-letter code: Protein disulfide-isomerase 5-2 (440 aa).

Residues 1 to 23 form the signal peptide; sequence MRSLKLLLCWISFLTLSISISAS. Residues 24-139 form the Thioredoxin domain; the sequence is SDDQFTLDGT…LVRYLKKFVA (116 aa). Residues cysteine 61 and cysteine 64 each act as nucleophile in the active site. Residues cysteine 61 and cysteine 64 are joined by a disulfide bond. Threonine 160 carries the post-translational modification Phosphothreonine. Asparagine 171 carries an N-linked (GlcNAc...) asparagine glycan. The chain crosses the membrane as a helical span at residues 376 to 396; it reads SMIGIRSVYILVFLVAVIMML. Residues 406–440 are disordered; it reads TGVRTATAVRERVDQATTVPEDESSEHKPSDKKED. A compositionally biased stretch (basic and acidic residues) spans 430–440; sequence SEHKPSDKKED.

Belongs to the protein disulfide isomerase family. Widely expressed.

The protein resides in the membrane. Its function is as follows. Acts as a protein-folding catalyst that interacts with nascent polypeptides to catalyze the formation, isomerization, and reduction or oxidation of disulfide bonds. The chain is Protein disulfide-isomerase 5-2 (PDIL5-2) from Arabidopsis thaliana (Mouse-ear cress).